The sequence spans 167 residues: MSLLPILYYPDHRLRQISKPVNKINNSIYRIVYDMFDTMYHKNGIGLAAPQVNINLNIIVIDVSENKEQRLVLINPELLAKSGETGIHEGCLSIPEQHGFVPRAKNIKVRALDLNGNSFNLETNDLQAICIQHEMDHLVGKLFIDYLSPLKRQRLLKKMKQLIRNLD.

Fe cation contacts are provided by cysteine 91 and histidine 133. Glutamate 134 is a catalytic residue. Position 137 (histidine 137) interacts with Fe cation.

The protein belongs to the polypeptide deformylase family. Fe(2+) is required as a cofactor.

It carries out the reaction N-terminal N-formyl-L-methionyl-[peptide] + H2O = N-terminal L-methionyl-[peptide] + formate. In terms of biological role, removes the formyl group from the N-terminal Met of newly synthesized proteins. Requires at least a dipeptide for an efficient rate of reaction. N-terminal L-methionine is a prerequisite for activity but the enzyme has broad specificity at other positions. In Baumannia cicadellinicola subsp. Homalodisca coagulata, this protein is Peptide deformylase.